The following is a 160-amino-acid chain: Transcriptional repressor NrdR (160 aa).

The segment at 3 to 34 is a zinc-finger region; the sequence is CPYCQYEDTQVKDSRPSEEGTVIRRRRICSVC. One can recognise an ATP-cone domain in the interval 49–139; the sequence is LLVLKKSGRY…VYRDFRNASD (91 aa).

Belongs to the NrdR family. The cofactor is Zn(2+).

Its function is as follows. Negatively regulates transcription of bacterial ribonucleotide reductase nrd genes and operons by binding to NrdR-boxes. The sequence is that of Transcriptional repressor NrdR from Bartonella henselae (strain ATCC 49882 / DSM 28221 / CCUG 30454 / Houston 1) (Rochalimaea henselae).